The following is a 598-amino-acid chain: UvrABC system protein C (598 aa).

Residues Asp14–Ile91 form the GIY-YIG domain. The region spanning Asp196–Met231 is the UVR domain.

This sequence belongs to the UvrC family. In terms of assembly, interacts with UvrB in an incision complex.

Its subcellular location is the cytoplasm. In terms of biological role, the UvrABC repair system catalyzes the recognition and processing of DNA lesions. UvrC both incises the 5' and 3' sides of the lesion. The N-terminal half is responsible for the 3' incision and the C-terminal half is responsible for the 5' incision. This chain is UvrABC system protein C, found in Streptococcus pyogenes serotype M6 (strain ATCC BAA-946 / MGAS10394).